Here is a 2387-residue protein sequence, read N- to C-terminus: Paternally-expressed gene 3 protein (2387 aa).

In terms of domain architecture, SCAN box spans 44–126; sequence HQRFRNFLYV…ALLEDYEAMY (83 aa). 4 disordered regions span residues 127–194, 262–305, 321–371, and 392–423; these read EPED…RDLA, DGHS…ICEA, ARSS…AFGG, and RYHF…EARR. Composition is skewed to basic and acidic residues over residues 160–179, 291–305, 321–364, and 404–423; these read SERE…DRWP, PETK…ICEA, ARSS…ERGP, and HDPR…EARR. A C2H2-type 1 zinc finger spans residues 451–473; that stretch reads YVCDECGRSFAVISEFVEHQIVH. The segment at 492–542 is disordered; the sequence is SEAQSRPEGARRSEGAQAAGLAEHRGGQAQEHLRGSGDEEQDEPFLPSPTF. Over residues 513 to 528 the composition is skewed to basic and acidic residues; that stretch reads AEHRGGQAQEHLRGSG. C2H2-type zinc fingers lie at residues 555 to 577 and 610 to 632; these read YECK…QKIH and YECK…QKTH. The C2H2-type 4; degenerate zinc-finger motif lies at 668–690; sequence YDFREGGDAFGRSSDFMEHQKIH. Disordered stretches follow at residues 704–747, 764–797, and 820–858; these read PLLH…EARG, FRPP…ESPY, and DHLA…NIER. The span at 711–720 shows a compositional bias: polar residues; sequence MPGSQKSHTI. Positions 846-856 are enriched in basic residues; it reads HQKARAKKKNI. Residues 884–906 form a C2H2-type 5 zinc finger; sequence YECLECGEFFVRSSELAEHQKIH. 57 tandem repeats follow at residues 965–973, 974–982, 983–991, 1001–1009, 1010–1018, 1028–1036, 1046–1054, 1055–1063, 1073–1081, 1091–1099, 1109–1117, 1118–1126, 1136–1144, 1145–1153, 1154–1162, 1163–1171, 1172–1180, 1190–1198, 1199–1207, 1217–1225, 1235–1243, 1253–1261, 1280–1288, 1289–1297, 1298–1306, 1307–1315, 1316–1324, 1325–1333, 1334–1342, 1343–1351, 1352–1360, 1361–1369, 1370–1378, 1379–1387, 1388–1396, 1397–1405, 1406–1414, 1415–1423, 1424–1432, 1433–1441, 1442–1450, 1451–1459, 1460–1468, 1469–1477, 1478–1486, 1496–1504, 1505–1513, 1514–1522, 1523–1531, 1532–1540, 1541–1549, 1550–1558, 1559–1567, 1568–1576, 1577–1585, 1586–1594, and 1595–1603. 2 stretches are compositionally biased toward polar residues: residues 965–989 and 1001–1020; these read PAQT…TSYT and PAQT…NPAA. The segment at 965 to 1603 is 37 X 9 AA repeat of P-A-Q-T-X-Y-X-X-E; the sequence is PAQTSYAVEP…EPAQTSYSEE (639 aa). The tract at residues 965–1651 is disordered; it reads PAQTSYAVEP…RPDMPRNQPR (687 aa). Residues 1046–1079 are compositionally biased toward polar residues; sequence PAQTSCIEEPAQTSYTNPAAETSYTEEPAQTSYT. 5 stretches are compositionally biased toward polar residues: residues 1107-1178, 1190-1206, 1217-1242, 1251-1484, and 1496-1601; these read EEPS…TSYT, PAQT…NYTK, PAQT…NYTV, EEPS…TNYT, and PAQT…TSYS. The segment at 1859–1881 adopts a C2H2-type 6; degenerate zinc-finger fold; the sequence is NECKECGECFATVEDLGRHQKIY. The disordered stretch occupies residues 1900–1921; sequence LGLDGSPEEELEEQEEPEEPED. Over residues 1905–1921 the composition is skewed to acidic residues; the sequence is SPEEELEEQEEPEEPED. 5 C2H2-type zinc fingers span residues 1924–1946, 1980–2002, 2040–2062, 2097–2119, and 2148–2170; these read YGCK…QKVH, YECP…QKVH, PQCQ…ARGH, YECE…MRVH, and YECK…QKLH. The interval 2059–2102 is disordered; that stretch reads ARGHAGEGLPDQGQGGAGAAGPGPAPTEPQQDPGEEQRYECETC. The segment at 2204 to 2322 is disordered; that stretch reads NVEAAEPEVE…DCGECGETFP (119 aa). Composition is skewed to acidic residues over residues 2208–2228 and 2257–2311; these read AEPE…EVEA and EQPD…EEPY. 2 C2H2-type zinc fingers span residues 2312–2334 and 2363–2385; these read YDCG…LTAH and FKCD…QNTH.

It belongs to the krueppel C2H2-type zinc-finger protein family. Homodimer. Interacts with SIAH1A and SIAH2. Interacts with TRAF2. Expressed at high levels in the cerebellum and at moderate levels in the testis and ovary.

It is found in the nucleus. It localises to the cytoplasm. Induces apoptosis in cooperation with SIAH1A. Acts as a mediator between p53/TP53 and BAX in a neuronal death pathway that is activated by DNA damage. Acts synergistically with TRAF2 and inhibits TNF induced apoptosis through activation of NF-kappa-B. The sequence is that of Paternally-expressed gene 3 protein (PEG3) from Bos taurus (Bovine).